The primary structure comprises 588 residues: uncharacterized protein (588 aa).

A run of 7 helical transmembrane segments spans residues 14-34 (FLLF…KGIV), 49-69 (AVIL…IVSA), 78-98 (IFLC…GILG), 184-204 (ALVV…LVAI), 235-255 (VPIA…AVIG), 257-274 (VISS…SYQE), and 275-292 (SSFY…SIYD). S486 carries the phosphoserine modification. The segment at 566 to 588 (RKGSVNGSDQESQKGVSRNVDIV) is disordered. Residues 570 to 581 (VNGSDQESQKGV) show a composition bias toward polar residues.

The protein localises to the membrane. This is an uncharacterized protein from Arabidopsis thaliana (Mouse-ear cress).